Here is a 179-residue protein sequence, read N- to C-terminus: Phosphopantetheine adenylyltransferase (179 aa).

Ser23 lines the substrate pocket. ATP is bound by residues 23 to 24 and His31; that span reads SF. Substrate is bound by residues Lys55, Ala87, and Arg101. ATP is bound by residues 102–104, Glu112, and 137–143; these read GIR and FAHVSSS.

This sequence belongs to the bacterial CoaD family. As to quaternary structure, homohexamer. The cofactor is Mg(2+).

It localises to the cytoplasm. The catalysed reaction is (R)-4'-phosphopantetheine + ATP + H(+) = 3'-dephospho-CoA + diphosphate. Its pathway is cofactor biosynthesis; coenzyme A biosynthesis; CoA from (R)-pantothenate: step 4/5. Functionally, reversibly transfers an adenylyl group from ATP to 4'-phosphopantetheine, yielding dephospho-CoA (dPCoA) and pyrophosphate. This is Phosphopantetheine adenylyltransferase from Rhodopirellula baltica (strain DSM 10527 / NCIMB 13988 / SH1).